Consider the following 193-residue polypeptide: Xanthine phosphoribosyltransferase (193 aa).

L20 and T27 together coordinate xanthine. 128–132 (ANGQA) contacts 5-phospho-alpha-D-ribose 1-diphosphate. Residue K156 coordinates xanthine.

The protein belongs to the purine/pyrimidine phosphoribosyltransferase family. Xpt subfamily. As to quaternary structure, homodimer.

It localises to the cytoplasm. The enzyme catalyses XMP + diphosphate = xanthine + 5-phospho-alpha-D-ribose 1-diphosphate. The protein operates within purine metabolism; XMP biosynthesis via salvage pathway; XMP from xanthine: step 1/1. In terms of biological role, converts the preformed base xanthine, a product of nucleic acid breakdown, to xanthosine 5'-monophosphate (XMP), so it can be reused for RNA or DNA synthesis. The protein is Xanthine phosphoribosyltransferase of Streptococcus pyogenes serotype M5 (strain Manfredo).